Here is a 709-residue protein sequence, read N- to C-terminus: DNA topoisomerase 1 (709 aa).

A Toprim domain is found at 3-127; that stretch reads KNLVVIESPN…KCKRITFNEI (125 aa). 2 residues coordinate Mg(2+): Glu9 and Asp95. One can recognise a Topo IA-type catalytic domain in the interval 143 to 598; that stretch reads DLNWVESQFA…FWTNFKSDVK (456 aa). Residues 176–181 form an interaction with DNA region; sequence SAGRVQ. The O-(5'-phospho-DNA)-tyrosine intermediate role is filled by Tyr334. 2 consecutive C4-type zinc fingers follow at residues 618 to 646 and 667 to 696; these read CPKC…FPKC and CPEC…FPNC.

It belongs to the type IA topoisomerase family. Monomer. Mg(2+) serves as cofactor.

It catalyses the reaction ATP-independent breakage of single-stranded DNA, followed by passage and rejoining.. Its function is as follows. Releases the supercoiling and torsional tension of DNA, which is introduced during the DNA replication and transcription, by transiently cleaving and rejoining one strand of the DNA duplex. Introduces a single-strand break via transesterification at a target site in duplex DNA. The scissile phosphodiester is attacked by the catalytic tyrosine of the enzyme, resulting in the formation of a DNA-(5'-phosphotyrosyl)-enzyme intermediate and the expulsion of a 3'-OH DNA strand. The free DNA strand then undergoes passage around the unbroken strand, thus removing DNA supercoils. Finally, in the religation step, the DNA 3'-OH attacks the covalent intermediate to expel the active-site tyrosine and restore the DNA phosphodiester backbone. The chain is DNA topoisomerase 1 from Mycoplasma genitalium (strain ATCC 33530 / DSM 19775 / NCTC 10195 / G37) (Mycoplasmoides genitalium).